The primary structure comprises 179 residues: ATP synthase subunit delta (179 aa).

It belongs to the ATPase delta chain family. In terms of assembly, F-type ATPases have 2 components, F(1) - the catalytic core - and F(0) - the membrane proton channel. F(1) has five subunits: alpha(3), beta(3), gamma(1), delta(1), epsilon(1). F(0) has three main subunits: a(1), b(2) and c(10-14). The alpha and beta chains form an alternating ring which encloses part of the gamma chain. F(1) is attached to F(0) by a central stalk formed by the gamma and epsilon chains, while a peripheral stalk is formed by the delta and b chains.

The protein resides in the cell membrane. F(1)F(0) ATP synthase produces ATP from ADP in the presence of a proton or sodium gradient. F-type ATPases consist of two structural domains, F(1) containing the extramembraneous catalytic core and F(0) containing the membrane proton channel, linked together by a central stalk and a peripheral stalk. During catalysis, ATP synthesis in the catalytic domain of F(1) is coupled via a rotary mechanism of the central stalk subunits to proton translocation. In terms of biological role, this protein is part of the stalk that links CF(0) to CF(1). It either transmits conformational changes from CF(0) to CF(1) or is implicated in proton conduction. This chain is ATP synthase subunit delta, found in Staphylococcus carnosus (strain TM300).